The chain runs to 619 residues: Guanylate cyclase soluble subunit beta-1 (619 aa).

Position 105 (His-105) interacts with heme. Residues 421–554 (TILFSGIVGF…NTVNLTSRTE (134 aa)) enclose the Guanylate cyclase domain.

This sequence belongs to the adenylyl cyclase class-4/guanylyl cyclase family. In terms of assembly, the active enzyme is formed by a heterodimer of an alpha and a beta subunit. Heterodimer with GUCY1A1. Can also form inactive homodimers in vitro. Heme is required as a cofactor. As to expression, detected in brain cortex and cerebellum (at protein level).

Its subcellular location is the cytoplasm. The catalysed reaction is GTP = 3',5'-cyclic GMP + diphosphate. Its activity is regulated as follows. Activated by nitric oxide in the presence of magnesium or manganese ions. Its function is as follows. Mediates responses to nitric oxide (NO) by catalyzing the biosynthesis of the signaling molecule cGMP. In Homo sapiens (Human), this protein is Guanylate cyclase soluble subunit beta-1.